Consider the following 338-residue polypeptide: Holliday junction branch migration complex subunit RuvB (338 aa).

Residues 1–181 (MTRTITPSIT…FGVISRLEFY (181 aa)) form a large ATPase domain (RuvB-L) region. Residues L20, R21, G62, K65, T66, T67, 128–130 (EDF), R171, Y181, and R218 contribute to the ATP site. Position 66 (T66) interacts with Mg(2+). The tract at residues 182 to 252 (TDEELAFIIT…VVQDALALLE (71 aa)) is small ATPAse domain (RuvB-S). The head domain (RuvB-H) stretch occupies residues 255 to 338 (EMGFDQMDRM…VPEPPQGKLF (84 aa)). DNA contacts are provided by R310 and R315.

This sequence belongs to the RuvB family. Homohexamer. Forms an RuvA(8)-RuvB(12)-Holliday junction (HJ) complex. HJ DNA is sandwiched between 2 RuvA tetramers; dsDNA enters through RuvA and exits via RuvB. An RuvB hexamer assembles on each DNA strand where it exits the tetramer. Each RuvB hexamer is contacted by two RuvA subunits (via domain III) on 2 adjacent RuvB subunits; this complex drives branch migration. In the full resolvosome a probable DNA-RuvA(4)-RuvB(12)-RuvC(2) complex forms which resolves the HJ.

It is found in the cytoplasm. It carries out the reaction ATP + H2O = ADP + phosphate + H(+). The RuvA-RuvB-RuvC complex processes Holliday junction (HJ) DNA during genetic recombination and DNA repair, while the RuvA-RuvB complex plays an important role in the rescue of blocked DNA replication forks via replication fork reversal (RFR). RuvA specifically binds to HJ cruciform DNA, conferring on it an open structure. The RuvB hexamer acts as an ATP-dependent pump, pulling dsDNA into and through the RuvAB complex. RuvB forms 2 homohexamers on either side of HJ DNA bound by 1 or 2 RuvA tetramers; 4 subunits per hexamer contact DNA at a time. Coordinated motions by a converter formed by DNA-disengaged RuvB subunits stimulates ATP hydrolysis and nucleotide exchange. Immobilization of the converter enables RuvB to convert the ATP-contained energy into a lever motion, pulling 2 nucleotides of DNA out of the RuvA tetramer per ATP hydrolyzed, thus driving DNA branch migration. The RuvB motors rotate together with the DNA substrate, which together with the progressing nucleotide cycle form the mechanistic basis for DNA recombination by continuous HJ branch migration. Branch migration allows RuvC to scan DNA until it finds its consensus sequence, where it cleaves and resolves cruciform DNA. The chain is Holliday junction branch migration complex subunit RuvB from Geotalea uraniireducens (strain Rf4) (Geobacter uraniireducens).